Reading from the N-terminus, the 1241-residue chain is ATP-dependent helicase/nuclease subunit A (1241 aa).

The UvrD-like helicase ATP-binding domain maps to 12–485 (SQWTDDQWKA…IDLAKNFRSR (474 aa)). 33–40 (AAAGSGKT) provides a ligand contact to ATP. Positions 505-805 (GEIDYDADAE…RIMTIHKSKG (301 aa)) constitute a UvrD-like helicase C-terminal domain.

It belongs to the helicase family. AddA subfamily. In terms of assembly, heterodimer of AddA and AddB/RexB. It depends on Mg(2+) as a cofactor.

The enzyme catalyses Couples ATP hydrolysis with the unwinding of duplex DNA by translocating in the 3'-5' direction.. It carries out the reaction ATP + H2O = ADP + phosphate + H(+). In terms of biological role, the heterodimer acts as both an ATP-dependent DNA helicase and an ATP-dependent, dual-direction single-stranded exonuclease. Recognizes the chi site generating a DNA molecule suitable for the initiation of homologous recombination. The AddA nuclease domain is required for chi fragment generation; this subunit has the helicase and 3' -&gt; 5' nuclease activities. The polypeptide is ATP-dependent helicase/nuclease subunit A (Bacillus cereus (strain AH187)).